The chain runs to 549 residues: uncharacterized protein (549 aa).

Transmembrane regions (helical) follow at residues 1–21, 28–48, 50–70, 85–105, 106–126, 165–185, 187–207, 222–242, 278–298, 310–330, 361–381, and 398–418; these read MEIF…GVVT, IPLP…TFGL, VEFD…FADG, IFGL…FLIY, WVVP…LSPT, FAVA…TVEF, KVAI…GRSL, IVLL…IGVS, LEFV…PGIL, NVEI…LMLV, ILIA…VLSI, and VFLA…MLPI.

This sequence belongs to the monovalent cation:proton antiporter 1 (CPA1) transporter (TC 2.A.36) family.

Its subcellular location is the cell inner membrane. This is an uncharacterized protein from Escherichia coli (strain K12).